The sequence spans 147 residues: D-aminoacyl-tRNA deacylase (147 aa).

Positions 136–137 (GP) match the Gly-cisPro motif, important for rejection of L-amino acids motif.

This sequence belongs to the DTD family. In terms of assembly, homodimer.

It localises to the cytoplasm. The enzyme catalyses glycyl-tRNA(Ala) + H2O = tRNA(Ala) + glycine + H(+). It carries out the reaction a D-aminoacyl-tRNA + H2O = a tRNA + a D-alpha-amino acid + H(+). Its function is as follows. An aminoacyl-tRNA editing enzyme that deacylates mischarged D-aminoacyl-tRNAs. Also deacylates mischarged glycyl-tRNA(Ala), protecting cells against glycine mischarging by AlaRS. Acts via tRNA-based rather than protein-based catalysis; rejects L-amino acids rather than detecting D-amino acids in the active site. By recycling D-aminoacyl-tRNA to D-amino acids and free tRNA molecules, this enzyme counteracts the toxicity associated with the formation of D-aminoacyl-tRNA entities in vivo and helps enforce protein L-homochirality. The protein is D-aminoacyl-tRNA deacylase of Streptococcus equi subsp. zooepidemicus (strain H70).